The sequence spans 413 residues: Histidine--tRNA ligase (413 aa).

This sequence belongs to the class-II aminoacyl-tRNA synthetase family. As to quaternary structure, homodimer.

It localises to the cytoplasm. The enzyme catalyses tRNA(His) + L-histidine + ATP = L-histidyl-tRNA(His) + AMP + diphosphate + H(+). The sequence is that of Histidine--tRNA ligase from Geobacter sulfurreducens (strain ATCC 51573 / DSM 12127 / PCA).